A 308-amino-acid polypeptide reads, in one-letter code: MPVIAADKPLHLTSHDVVNRARRALGTKRVGHTGTLDPLATGVVVLCVDDSTKLVQFMEHDTKEYLAWVSLGAGTPTLDAEGPIEQQAEVPPLDEDHLREVLKGFLGPQQQIPPQYSAIQIGGQRAYAVARAGGQLDLPARDVEIHELELIGMFPSVQAAPRTFDPQSWTPAAAGLTFTLPEPLGEFPTLLLRAHVGSGTYLRSLARDLGAALGVPAHLGGLVRTRAGRYSLRDAVSLENLTEAPTIPDLDALDFPRIEADERLARELRQGKRPAHPQRGRAVVTLGGELVAVVDGDGEHLKVVRAWA.

Asp-37 serves as the catalytic Nucleophile.

It belongs to the pseudouridine synthase TruB family. Type 1 subfamily.

It carries out the reaction uridine(55) in tRNA = pseudouridine(55) in tRNA. Responsible for synthesis of pseudouridine from uracil-55 in the psi GC loop of transfer RNAs. The protein is tRNA pseudouridine synthase B of Deinococcus radiodurans (strain ATCC 13939 / DSM 20539 / JCM 16871 / CCUG 27074 / LMG 4051 / NBRC 15346 / NCIMB 9279 / VKM B-1422 / R1).